Reading from the N-terminus, the 402-residue chain is Bone morphogenetic protein 8A (402 aa).

An N-terminal signal peptide occupies residues 1–19; it reads MAARPGPLWLLGLTLCALG. Residues 20–263 constitute a propeptide that is removed on maturation; it reads GGGPGLRPPP…ASPSPIRTPR (244 aa). N-linked (GlcNAc...) asparagine glycosylation is found at N158 and N343. Cystine bridges form between C301–C367, C330–C399, and C334–C401.

It belongs to the TGF-beta family. As to quaternary structure, homodimer; disulfide-linked.

It is found in the secreted. In terms of biological role, induces cartilage and bone formation. May be the osteoinductive factor responsible for the phenomenon of epithelial osteogenesis. Plays a role in calcium regulation and bone homeostasis. Signaling protein involved in regulation of thermogenesis and energy balance. Proposed to increase the peripheral response of brown adipose tissue (BAT) to adrenergic stimulation while acting centrally in the hypothalamus to increase sympathetic output to BAT. Functionally, growth factor of the TGF-beta superfamily that plays important role in various biological processes, including spermatogenesis, osteogenesis, steroidogenesis as well as regulation of energy balance. Initiates the canonical BMP signaling cascade by associating with type I receptor BMPR1A and type II receptor BMPR2. Once all three components are bound together in a complex at the cell surface, BMPR2 phosphorylates and activates BMPR1A. In turn, BMPR1A propagates signal by phosphorylating SMAD1/5/8 that travel to the nucleus and act as activators and repressors of transcription of target genes. In addition, activates the SMAD2/3 pathway. The sequence is that of Bone morphogenetic protein 8A (BMP8A) from Homo sapiens (Human).